The following is a 136-amino-acid chain: Crossover junction endodeoxyribonuclease Hjc (136 aa).

Glutamate 9 lines the Mg(2+) pocket. Serine 29 is an active-site residue. Residues aspartate 38 and glutamate 51 each coordinate Mg(2+).

The protein belongs to the Holliday junction resolvase Hjc family. In terms of assembly, homodimer. Mg(2+) is required as a cofactor.

It catalyses the reaction Endonucleolytic cleavage at a junction such as a reciprocal single-stranded crossover between two homologous DNA duplexes (Holliday junction).. A structure-specific endonuclease that resolves Holliday junction (HJ) intermediates during genetic recombination. Cleaves 4-way DNA junctions introducing paired nicks in opposing strands, leaving a 5'-terminal phosphate and a 3'-terminal hydroxyl group that are subsequently ligated to produce recombinant products. This chain is Crossover junction endodeoxyribonuclease Hjc, found in Archaeoglobus fulgidus (strain ATCC 49558 / DSM 4304 / JCM 9628 / NBRC 100126 / VC-16).